Reading from the N-terminus, the 302-residue chain is uncharacterized protein (302 aa).

3 N-linked (GlcNAc...) asparagine glycosylation sites follow: asparagine 32, asparagine 39, and asparagine 94. The ShKT domain occupies 80-115 (CRDTDMNCAVWVATNTSDCENVELVNSHCPRTCQTC). 3 cysteine pairs are disulfide-bonded: cysteine 80–cysteine 115, cysteine 87–cysteine 108, and cysteine 98–cysteine 112. Asparagine 181 carries N-linked (GlcNAc...) asparagine glycosylation.

This is an uncharacterized protein from Caenorhabditis elegans.